We begin with the raw amino-acid sequence, 453 residues long: Probable L-galactonate transporter (453 aa).

A disordered region spans residues 1–23 (MEKENITIDPRSSFTPSSSADIP). The Periplasmic portion of the chain corresponds to 1–42 (MEKENITIDPRSSFTPSSSADIPVPPDGLVQRSTRIKRIQTT). Residues 10–20 (PRSSFTPSSSA) show a composition bias toward polar residues. The helical transmembrane segment at 43 to 63 (AMLLLFFAAVINYLDRSSLSV) threads the bilayer. Over 64 to 71 (ANLTIREE) the chain is Cytoplasmic. Residues 72–92 (LGLSATEIGALLSVFSLAYGI) form a helical membrane-spanning segment. The Periplasmic segment spans residues 93–107 (AQLPCGPLLDRKGPR). A helical membrane pass occupies residues 108 to 128 (LMLGLGMFFWSLFQAMSGMVH). The Cytoplasmic segment spans residues 129-174 (NFTQFVLVRIGMGIGEAPMNPCGVKVINDWFNIKERGRPMGFFNAA). The chain crosses the membrane as a helical span at residues 175 to 195 (STIGVAVSPPILAAMMLVMGW). R196 is a topological domain (periplasmic). A helical transmembrane segment spans residues 197–217 (GMFITIGVLGIFLAIGWYMLY). At 218-259 (RNREHVELTAVEQAYLNAGSVNARRDPLSFAEWRSLFRNRTM) the chain is on the cytoplasmic side. The chain crosses the membrane as a helical span at residues 260 to 280 (WGMMLGFSGINYTAWLYLAWL). The Periplasmic portion of the chain corresponds to 281–295 (PGYLQTAYNLDLKST). A helical membrane pass occupies residues 296–316 (GLMAAIPFLFGAAGMLVNGYV). The Cytoplasmic segment spans residues 317-332 (TDWLVKGGMAPIKSRK). The helical transmembrane segment at 333-353 (ICIIAGMFCSAAFTLIVPQAT) threads the bilayer. Over 354–359 (TSMTAV) the chain is Periplasmic. A helical membrane pass occupies residues 360–380 (LLIGMALFCIHFAGTSCWGLI). The Cytoplasmic portion of the chain corresponds to 381-394 (HVAVASRMTASVGS). A helical membrane pass occupies residues 395 to 415 (IQNFASFICASFAPIITGFIV). Topologically, residues 416 to 422 (DTTHSFR) are periplasmic. The chain crosses the membrane as a helical span at residues 423–443 (LALIICGCVTAAGALAYIFLV). Residues 444 to 453 (RQPINDPRKD) are Cytoplasmic-facing.

This sequence belongs to the major facilitator superfamily. Phthalate permease family.

The protein resides in the cell inner membrane. It carries out the reaction L-galactonate(in) + H(+)(in) = L-galactonate(out) + H(+)(out). Probably responsible for the transport of L-galactonate from the periplasm across the inner membrane. Is essential for growth on L-galactonate as the sole carbon source. The sequence is that of Probable L-galactonate transporter (lgoT) from Escherichia coli (strain K12).